A 194-amino-acid polypeptide reads, in one-letter code: Small ribosomal subunit protein uS7 (194 aa).

The protein belongs to the universal ribosomal protein uS7 family. In terms of assembly, part of the 30S ribosomal subunit.

Its function is as follows. One of the primary rRNA binding proteins, it binds directly to 16S rRNA where it nucleates assembly of the head domain of the 30S subunit. Is located at the subunit interface close to the decoding center. This is Small ribosomal subunit protein uS7 from Methanospirillum hungatei JF-1 (strain ATCC 27890 / DSM 864 / NBRC 100397 / JF-1).